A 223-amino-acid chain; its full sequence is uncharacterized protein (223 aa).

The transit peptide at 1–12 (MFRSLVRKTTPL) directs the protein to the mitochondrion.

The protein localises to the mitochondrion. This is an uncharacterized protein from Candida albicans (strain WO-1) (Yeast).